We begin with the raw amino-acid sequence, 709 residues long: Eukaryotic translation initiation factor 3 subunit B (709 aa).

The sufficient for interaction with HCR1 and TIF32 stretch occupies residues 1 to 98 (MSINEEEYLR…LFIQYKNVAD (98 aa)). The segment at 1 to 221 (MSINEEEYLR…GIQAWGGADF (221 aa)) is sufficient for interaction with PIC8. An RRM domain is found at 37–124 (NYVIVDGAPI…HRLLVNRLSD (88 aa)).

This sequence belongs to the eIF-3 subunit B family. In terms of assembly, component of the eukaryotic translation initiation factor 3 (eIF-3) complex.

It is found in the cytoplasm. In terms of biological role, RNA-binding component of the eukaryotic translation initiation factor 3 (eIF-3) complex, which is involved in protein synthesis of a specialized repertoire of mRNAs and, together with other initiation factors, stimulates binding of mRNA and methionyl-tRNAi to the 40S ribosome. The eIF-3 complex specifically targets and initiates translation of a subset of mRNAs involved in cell proliferation. The polypeptide is Eukaryotic translation initiation factor 3 subunit B (Lodderomyces elongisporus (strain ATCC 11503 / CBS 2605 / JCM 1781 / NBRC 1676 / NRRL YB-4239) (Yeast)).